The chain runs to 167 residues: MARVAVLVAGAVLAFLLAATNVTAKRWTVGDNKFWNPNINYTIWAQDKHFYLDDWLYFVYERNQYNVIEVNETNYISCNPNNPIANWSRGAGRDLVHLNVTRHYYLISGNGGGCYGGMKLAVLVEKPPPPPAAAPNKNSARRTFSVSGFAYQFLIPVAVFAAVGTRY.

An N-terminal signal peptide occupies residues 1 to 24; that stretch reads MARVAVLVAGAVLAFLLAATNVTA. In terms of domain architecture, Phytocyanin spans 25–126; the sequence is KRWTVGDNKF…GMKLAVLVEK (102 aa). N-linked (GlcNAc...) asparagine glycans are attached at residues asparagine 40, asparagine 71, asparagine 86, and asparagine 99. Cysteine 78 and cysteine 114 are disulfide-bonded. Asparagine 138 carries GPI-anchor amidated asparagine lipidation. A propeptide spans 139 to 167 (removed in mature form); that stretch reads SARRTFSVSGFAYQFLIPVAVFAAVGTRY.

Belongs to the early nodulin-like (ENODL) family.

It is found in the cell membrane. Its function is as follows. May act as a carbohydrate transporter. In Arabidopsis thaliana (Mouse-ear cress), this protein is Early nodulin-like protein 16.